A 197-amino-acid polypeptide reads, in one-letter code: uncharacterized protein (197 aa).

Transmembrane regions (helical) follow at residues 30–50 (WVAM…VEMA), 61–81 (LVAG…PPLV), 101–121 (LWSV…LGLA), and 130–150 (IGEF…VAML).

It is found in the cell membrane. This is an uncharacterized protein from Mycobacterium tuberculosis (strain CDC 1551 / Oshkosh).